The following is a 156-amino-acid chain: Small ribosomal subunit protein uS7 (156 aa).

It belongs to the universal ribosomal protein uS7 family. In terms of assembly, part of the 30S ribosomal subunit. Contacts proteins S9 and S11.

In terms of biological role, one of the primary rRNA binding proteins, it binds directly to 16S rRNA where it nucleates assembly of the head domain of the 30S subunit. Is located at the subunit interface close to the decoding center, probably blocks exit of the E-site tRNA. This is Small ribosomal subunit protein uS7 from Edwardsiella ictaluri (strain 93-146).